The following is a 266-amino-acid chain: Indole-3-glycerol phosphate synthase (266 aa).

It belongs to the TrpC family.

It catalyses the reaction 1-(2-carboxyphenylamino)-1-deoxy-D-ribulose 5-phosphate + H(+) = (1S,2R)-1-C-(indol-3-yl)glycerol 3-phosphate + CO2 + H2O. The protein operates within amino-acid biosynthesis; L-tryptophan biosynthesis; L-tryptophan from chorismate: step 4/5. The chain is Indole-3-glycerol phosphate synthase from Variovorax paradoxus (strain S110).